A 346-amino-acid chain; its full sequence is Biotin synthase (346 aa).

The 219-residue stretch at glutamine 38–threonine 256 folds into the Radical SAM core domain. Residues cysteine 53, cysteine 57, and cysteine 60 each contribute to the [4Fe-4S] cluster site. [2Fe-2S] cluster contacts are provided by cysteine 97, cysteine 128, cysteine 188, and arginine 260.

This sequence belongs to the radical SAM superfamily. Biotin synthase family. Homodimer. The cofactor is [4Fe-4S] cluster. [2Fe-2S] cluster is required as a cofactor.

The catalysed reaction is (4R,5S)-dethiobiotin + (sulfur carrier)-SH + 2 reduced [2Fe-2S]-[ferredoxin] + 2 S-adenosyl-L-methionine = (sulfur carrier)-H + biotin + 2 5'-deoxyadenosine + 2 L-methionine + 2 oxidized [2Fe-2S]-[ferredoxin]. Its pathway is cofactor biosynthesis; biotin biosynthesis; biotin from 7,8-diaminononanoate: step 2/2. Its function is as follows. Catalyzes the conversion of dethiobiotin (DTB) to biotin by the insertion of a sulfur atom into dethiobiotin via a radical-based mechanism. This chain is Biotin synthase, found in Salmonella choleraesuis (strain SC-B67).